Reading from the N-terminus, the 165-residue chain is Phosphopantetheine adenylyltransferase (165 aa).

Threonine 10 serves as a coordination point for substrate. ATP contacts are provided by residues threonine 10 to phenylalanine 11 and histidine 18. Residues lysine 42, leucine 75, and arginine 89 each contribute to the substrate site. ATP-binding positions include glycine 90–arginine 92, glutamate 100, and valine 125–serine 131.

This sequence belongs to the bacterial CoaD family. In terms of assembly, homohexamer. It depends on Mg(2+) as a cofactor.

The protein localises to the cytoplasm. The enzyme catalyses (R)-4'-phosphopantetheine + ATP + H(+) = 3'-dephospho-CoA + diphosphate. It functions in the pathway cofactor biosynthesis; coenzyme A biosynthesis; CoA from (R)-pantothenate: step 4/5. In terms of biological role, reversibly transfers an adenylyl group from ATP to 4'-phosphopantetheine, yielding dephospho-CoA (dPCoA) and pyrophosphate. In Buchnera aphidicola subsp. Schizaphis graminum (strain Sg), this protein is Phosphopantetheine adenylyltransferase.